A 549-amino-acid polypeptide reads, in one-letter code: MSADITETPAWQALSDHHAEIGDRHLTELFADDPARGTELALTVGDLYIDYSKHRVTRRTLDLLVDLARAAGLEERRDAMFAGEHINTSEDRAVLHTALRLPRDAKLVVDGQDVVADVHDVLDRMGDFTDRLRSGEWTGATGERITTVVNIGIGGSDLGPVMVYDALRHYADAGISARFVSNVDPADLVAKLDGLEPAKTLFIVASKTFSTLETLTNATAARRWLTDALGDAAVAKHSSRCPPTRSWSTKFGINTDNMFGFWDWVGGRYSVDSAIGLSVMAVIGKERFAEFLAGFHIVDEHFRTAPLHQNAPALLGLIGLWYSNFFGAQSRAVLPYSNDLSRFAAYLQQLTMESNGKSVRADGTPVSTDTGEIFWGEPGTNGQHAFYQLLHQGTRLVPADFIGFSQPTDDLPTADGTGSMHDLLMSNFFAQTQVLAFGKTADAIASEGTPADVVPHKVMPGNRPTTSILATKLTPSVVGQLIALYEHQVFTEGVIWGIDSFDQWGVELGKTQAKALLPVLTGDKSPAAQSDTSTDALVRRYRTERGRPA.

Residue Glu353 is the Proton donor of the active site. Residues His384 and Lys510 contribute to the active site.

This sequence belongs to the GPI family.

It is found in the cytoplasm. The catalysed reaction is alpha-D-glucose 6-phosphate = beta-D-fructose 6-phosphate. It participates in carbohydrate biosynthesis; gluconeogenesis. The protein operates within carbohydrate degradation; glycolysis; D-glyceraldehyde 3-phosphate and glycerone phosphate from D-glucose: step 2/4. Its function is as follows. Catalyzes the reversible isomerization of glucose-6-phosphate to fructose-6-phosphate. This chain is Glucose-6-phosphate isomerase, found in Mycolicibacterium smegmatis (Mycobacterium smegmatis).